The following is a 689-amino-acid chain: Potassium-transporting ATPase ATP-binding subunit (689 aa).

The next 4 membrane-spanning stretches (helical) occupy residues 35–55 (VMFV…AILA), 62–82 (AAFT…ANFA), 220–240 (ALTI…ATLF), and 260–280 (VLVA…LSAI). The active-site 4-aspartylphosphate intermediate is the Asp313. ATP-binding positions include Asp350, Glu354, 383-390 (FSAQTRMS), and Lys401. Positions 524 and 528 each coordinate Mg(2+). 3 consecutive transmembrane segments (helical) span residues 594–614 (FAII…LNVM), 622–642 (AIMS…PLAL), and 665–685 (VGGL…LVAL).

Belongs to the cation transport ATPase (P-type) (TC 3.A.3) family. Type IA subfamily. In terms of assembly, the system is composed of three essential subunits: KdpA, KdpB and KdpC.

The protein localises to the cell inner membrane. It catalyses the reaction K(+)(out) + ATP + H2O = K(+)(in) + ADP + phosphate + H(+). Functionally, part of the high-affinity ATP-driven potassium transport (or Kdp) system, which catalyzes the hydrolysis of ATP coupled with the electrogenic transport of potassium into the cytoplasm. This subunit is responsible for energy coupling to the transport system and for the release of the potassium ions to the cytoplasm. The polypeptide is Potassium-transporting ATPase ATP-binding subunit (Serratia proteamaculans (strain 568)).